Reading from the N-terminus, the 690-residue chain is Long-chain fatty acid transport protein 5 (690 aa).

The Cytoplasmic portion of the chain corresponds to methionine 1–alanine 30. 2 helical membrane passes run leucine 31–leucine 51 and leucine 56–leucine 76. At proline 77–leucine 690 the chain is on the cytoplasmic side. Residue phenylalanine 292–lysine 303 participates in AMP binding. Phosphoserine is present on serine 501.

Belongs to the ATP-dependent AMP-binding enzyme family. Predominantly expressed in liver.

The protein localises to the endoplasmic reticulum membrane. It localises to the microsome. The protein resides in the cell membrane. The catalysed reaction is a fatty acid(in) = a fatty acid(out). It carries out the reaction cholate + ATP + CoA = choloyl-CoA + AMP + diphosphate. The enzyme catalyses chenodeoxycholate + ATP + CoA = chenodeoxycholoyl-CoA + AMP + diphosphate. It catalyses the reaction deoxycholate + ATP + CoA = deoxycholoyl-CoA + AMP + diphosphate. The catalysed reaction is lithocholate + ATP + CoA = lithocholoyl-CoA + AMP + diphosphate. It carries out the reaction (25R)-3alpha,7alpha,12alpha-trihydroxy-5beta-cholestan-26-oate + ATP + CoA = (25R)-3alpha,7alpha,12alpha-trihydroxy-5beta-cholestan-26-oyl-CoA + AMP + diphosphate. The enzyme catalyses a very long-chain fatty acid + ATP + CoA = a very long-chain fatty acyl-CoA + AMP + diphosphate. It catalyses the reaction tetracosanoate + ATP + CoA = tetracosanoyl-CoA + AMP + diphosphate. The catalysed reaction is hexacosanoate + ATP + CoA = hexacosanoyl-CoA + AMP + diphosphate. It carries out the reaction a long-chain fatty acid + ATP + CoA = a long-chain fatty acyl-CoA + AMP + diphosphate. The enzyme catalyses octadecanoate + ATP + CoA = octadecanoyl-CoA + AMP + diphosphate. It catalyses the reaction eicosanoate + ATP + CoA = eicosanoyl-CoA + AMP + diphosphate. 3-alpha,7-alpha,12-alpha-trihydroxy-5-beta-cholestanate (THCA) inhibits the activation of cholate. Functionally, may mediate the import of long-chain fatty acids (LCFA) by facilitating their transport across cell membranes. Also catalyzes the ATP-dependent formation of fatty acyl-CoA using LCFA and very-long-chain fatty acids (VLCFA) as substrates. Mainly functions as a bile acyl-CoA synthetase catalyzing the activation of bile acids via ATP-dependent formation of bile acid CoA thioesters which is necessary for their subsequent conjugation with glycine or taurine. Both primary bile acids (cholic acid and chenodeoxycholic acid) and secondary bile acids (deoxycholic acid and lithocholic acid) are the principal substrates. In vitro, activates 3-alpha,7-alpha,12-alpha-trihydroxy-5-beta-cholestanate ((25R)-3alpha,7alpha,12alpha-trihydroxy-5beta-cholestan-26-oate or THCA), the C27 precursor of cholic acid deriving from the de novo synthesis from cholesterol. Plays an important role in hepatic fatty acid uptake and bile acid reconjugation and recycling but not in de novo synthesis of bile acids. This Homo sapiens (Human) protein is Long-chain fatty acid transport protein 5 (SLC27A5).